The sequence spans 146 residues: MSIPEITQTLLQAKKDQGLSFADLEAILGRNEVWIAALFYRQASASEEEAKLLVEALGLDPSYIQHLTEYPIKGLGPIVPTDPLIYRFYEIMQVYGFPIKQVIQEKFGDGIMSAIDFTLDVEKEADPKGDRVKITMSGKFLPYKKW.

Active-site residues include Arg-87, Glu-90, and Ser-113.

This sequence belongs to the cyanase family.

The catalysed reaction is cyanate + hydrogencarbonate + 3 H(+) = NH4(+) + 2 CO2. Catalyzes the reaction of cyanate with bicarbonate to produce ammonia and carbon dioxide. This Trichormus variabilis (strain ATCC 29413 / PCC 7937) (Anabaena variabilis) protein is Cyanate hydratase.